Consider the following 522-residue polypeptide: Calcium-dependent protein kinase 14 (522 aa).

Composition is skewed to low complexity over residues 1 to 12 (MGNCCPPGSSSE) and 19 to 45 (SSGS…AAPA). The disordered stretch occupies residues 1–58 (MGNCCPPGSSSEPDPPPASSGSSRPAGSAGAAASPATISPSAAPAPAKPPAPIGPVLG). The N-myristoyl glycine moiety is linked to residue G2. One can recognise a Protein kinase domain in the interval 68 to 326 (YTVGKELGRG…AYDVLNHPWI (259 aa)). ATP is bound by residues 74 to 82 (LGRGQFGVT) and K97. The Proton acceptor role is filled by D192. The autoinhibitory domain stretch occupies residues 332–362 (APDTPLDNAVLGRLKQFRAMNQFKKAALRVI). EF-hand domains follow at residues 369–404 (EEIR…KGTK), 405–440 (LTEA…MNRM), 441–476 (DREE…KGLM), and 480–511 (EIKD…GDPE). Residues D382, D384, S386, T388, E393, D418, D420, N422, T424, E429, D454, D456, S458, Y460, E465, D489, D491, D493, R495, and E500 each coordinate Ca(2+).

Belongs to the protein kinase superfamily. Ser/Thr protein kinase family. CDPK subfamily.

The protein localises to the membrane. The enzyme catalyses L-seryl-[protein] + ATP = O-phospho-L-seryl-[protein] + ADP + H(+). It carries out the reaction L-threonyl-[protein] + ATP = O-phospho-L-threonyl-[protein] + ADP + H(+). Its activity is regulated as follows. Activated by calcium. Autophosphorylation may play an important role in the regulation of the kinase activity. May play a role in signal transduction pathways that involve calcium as a second messenger. The sequence is that of Calcium-dependent protein kinase 14 from Oryza sativa subsp. japonica (Rice).